The primary structure comprises 456 residues: Bifunctional protein GlmU (456 aa).

The pyrophosphorylase stretch occupies residues M1–R231. Residues L10–G13, K24, Q77, and G82–T83 each bind UDP-N-acetyl-alpha-D-glucosamine. Residue D107 coordinates Mg(2+). 4 residues coordinate UDP-N-acetyl-alpha-D-glucosamine: G143, E157, N172, and N229. Residue N229 coordinates Mg(2+). The interval A232–A252 is linker. Residues G253–E456 form an N-acetyltransferase region. The UDP-N-acetyl-alpha-D-glucosamine site is built by R318 and K336. The Proton acceptor role is filled by H348. 2 residues coordinate UDP-N-acetyl-alpha-D-glucosamine: Y351 and N362. Acetyl-CoA-binding positions include A365, N371 to Y372, S390, S408, and R425.

This sequence in the N-terminal section; belongs to the N-acetylglucosamine-1-phosphate uridyltransferase family. The protein in the C-terminal section; belongs to the transferase hexapeptide repeat family. Homotrimer. Mg(2+) is required as a cofactor.

It is found in the cytoplasm. It carries out the reaction alpha-D-glucosamine 1-phosphate + acetyl-CoA = N-acetyl-alpha-D-glucosamine 1-phosphate + CoA + H(+). The enzyme catalyses N-acetyl-alpha-D-glucosamine 1-phosphate + UTP + H(+) = UDP-N-acetyl-alpha-D-glucosamine + diphosphate. The protein operates within nucleotide-sugar biosynthesis; UDP-N-acetyl-alpha-D-glucosamine biosynthesis; N-acetyl-alpha-D-glucosamine 1-phosphate from alpha-D-glucosamine 6-phosphate (route II): step 2/2. It functions in the pathway nucleotide-sugar biosynthesis; UDP-N-acetyl-alpha-D-glucosamine biosynthesis; UDP-N-acetyl-alpha-D-glucosamine from N-acetyl-alpha-D-glucosamine 1-phosphate: step 1/1. It participates in bacterial outer membrane biogenesis; LPS lipid A biosynthesis. Catalyzes the last two sequential reactions in the de novo biosynthetic pathway for UDP-N-acetylglucosamine (UDP-GlcNAc). The C-terminal domain catalyzes the transfer of acetyl group from acetyl coenzyme A to glucosamine-1-phosphate (GlcN-1-P) to produce N-acetylglucosamine-1-phosphate (GlcNAc-1-P), which is converted into UDP-GlcNAc by the transfer of uridine 5-monophosphate (from uridine 5-triphosphate), a reaction catalyzed by the N-terminal domain. In Sinorhizobium medicae (strain WSM419) (Ensifer medicae), this protein is Bifunctional protein GlmU.